A 209-amino-acid chain; its full sequence is Uracil phosphoribosyltransferase (209 aa).

Residues R79, R104, and D131–S139 each bind 5-phospho-alpha-D-ribose 1-diphosphate. Uracil-binding positions include I194 and G199–A201. A 5-phospho-alpha-D-ribose 1-diphosphate-binding site is contributed by D200.

Belongs to the UPRTase family. Mg(2+) serves as cofactor.

It catalyses the reaction UMP + diphosphate = 5-phospho-alpha-D-ribose 1-diphosphate + uracil. It functions in the pathway pyrimidine metabolism; UMP biosynthesis via salvage pathway; UMP from uracil: step 1/1. Allosterically activated by GTP. Catalyzes the conversion of uracil and 5-phospho-alpha-D-ribose 1-diphosphate (PRPP) to UMP and diphosphate. The sequence is that of Uracil phosphoribosyltransferase from Finegoldia magna (strain ATCC 29328 / DSM 20472 / WAL 2508) (Peptostreptococcus magnus).